A 271-amino-acid chain; its full sequence is Mediator of RNA polymerase II transcription subunit 18 (271 aa).

Residues 89–119 (FGGNPSSSGDPDVSMSGLEEKPSSSSSSYSY) are disordered.

This sequence belongs to the Mediator complex subunit 18 family. As to quaternary structure, component of the Mediator complex.

The protein resides in the nucleus. Functionally, component of the Mediator complex, a coactivator involved in the regulated transcription of nearly all RNA polymerase II-dependent genes. Mediator functions as a bridge to convey information from gene-specific regulatory proteins to the basal RNA polymerase II transcription machinery. Mediator is recruited to promoters by direct interactions with regulatory proteins and serves as a scaffold for the assembly of a functional preinitiation complex with RNA polymerase II and the general transcription factors. In Aspergillus niger (strain ATCC MYA-4892 / CBS 513.88 / FGSC A1513), this protein is Mediator of RNA polymerase II transcription subunit 18 (srb5).